The chain runs to 737 residues: Exostosin-1c (737 aa).

Residues 1-6 (MQARKK) lie on the Cytoplasmic side of the membrane. A helical; Signal-anchor for type II membrane protein transmembrane segment spans residues 7-27 (YVLLGLCTCCWILLYYWAGLQ). Topologically, residues 28 to 737 (ERLLGLITHR…RKRYKDLERV (710 aa)) are lumenal. Residues asparagine 194 and asparagine 322 are each glycosylated (N-linked (GlcNAc...) asparagine). UDP-N-acetyl-alpha-D-glucosamine-binding residues include arginine 432, arginine 540, aspartate 556, glutamate 557, aspartate 558, glutamate 644, aspartate 645, and arginine 692. Residue aspartate 558 coordinates Mn(2+). Cysteine 643 and cysteine 695 are oxidised to a cystine. Aspartate 645 is an active-site residue.

This sequence belongs to the glycosyltransferase 47 family. Requires Mn(2+) as cofactor.

The protein resides in the endoplasmic reticulum membrane. The catalysed reaction is 3-O-{[(1-&gt;4)-beta-D-GlcA-(1-&gt;4)-alpha-D-GlcNAc](n)-(1-&gt;4)-beta-D-GlcA-(1-&gt;3)-beta-D-Gal-(1-&gt;3)-beta-D-Gal-(1-&gt;4)-beta-D-Xyl}-L-seryl-[protein] + UDP-N-acetyl-alpha-D-glucosamine = 3-O-{alpha-D-GlcNAc-[(1-&gt;4)-beta-D-GlcA-(1-&gt;4)-alpha-D-GlcNAc](n)-(1-&gt;4)-beta-D-GlcA-(1-&gt;3)-beta-D-Gal-(1-&gt;3)-beta-D-Gal-(1-&gt;4)-beta-D-Xyl}-L-seryl-[protein] + UDP + H(+). It carries out the reaction 3-O-{alpha-D-GlcNAc-[(1-&gt;4)-beta-D-GlcA-(1-&gt;4)-alpha-D-GlcNAc](n)-(1-&gt;4)-beta-D-GlcA-(1-&gt;3)-beta-D-Gal-(1-&gt;3)-beta-D-Gal-(1-&gt;4)-beta-D-Xyl}-L-seryl-[protein] + UDP-alpha-D-glucuronate = 3-O-{[(1-&gt;4)-beta-D-GlcA-(1-&gt;4)-alpha-D-GlcNAc](n+1)-(1-&gt;4)-beta-D-GlcA-(1-&gt;3)-beta-D-Gal-(1-&gt;3)-beta-D-Gal-(1-&gt;4)-beta-D-Xyl}-L-seryl-[protein] + UDP + H(+). The protein operates within protein modification; protein glycosylation. Functionally, glycosyltransferase required for the biosynthesis of heparan-sulfate. This chain is Exostosin-1c (ext1c), found in Danio rerio (Zebrafish).